The sequence spans 307 residues: Acetaldehyde dehydrogenase (307 aa).

Ser12–Ile15 lines the NAD(+) pocket. Cys130 functions as the Acyl-thioester intermediate in the catalytic mechanism. Residues Ser161 to Asn169 and Asn272 contribute to the NAD(+) site.

Belongs to the acetaldehyde dehydrogenase family.

It catalyses the reaction acetaldehyde + NAD(+) + CoA = acetyl-CoA + NADH + H(+). In Shewanella halifaxensis (strain HAW-EB4), this protein is Acetaldehyde dehydrogenase.